We begin with the raw amino-acid sequence, 468 residues long: Beta-monoglucosyldiacylglycerol synthase (468 aa).

Helical transmembrane passes span 51 to 71 (AALV…VSWG), 72 to 92 (SIFI…VVFA), 358 to 378 (MLMF…DLLM), and 387 to 407 (MLGP…FAGL).

This sequence belongs to the glycosyltransferase 2 family. Requires Mg(2+) as cofactor.

Its subcellular location is the membrane. The enzyme catalyses a 1,2-diacyl-sn-glycerol + UDP-alpha-D-glucose = a 1,2-diacyl-3-O-(beta-D-glucopyranosyl)-sn-glycerol + UDP + H(+). Functionally, glucosyltransferase involved in the biosynthesis of the non-bilayer-forming membrane lipid beta-monoglucosyldiacylglycerol which contributes to regulate the properties and stability of the membrane. Catalyzes the transfer of a glucosyl residue from UDP-Glc to diacylglycerol (DAG) acceptor to form the corresponding beta-glucosyl-DAG (1,2-diacyl-3-O-(beta-D-glucopyranosyl)-sn-glycerol). It can only use UDP-Glc as sugar donor. Two types of DAG (dipalmitoyl-DAG (DPDAG) and 1-oleoyl-2-palmitoyl-DAG (OPDAG)) can be used as sugar acceptors, but OPDAG is preferred. The chain is Beta-monoglucosyldiacylglycerol synthase from Nostoc sp. (strain PCC 7120 / SAG 25.82 / UTEX 2576).